We begin with the raw amino-acid sequence, 72 residues long: Large ribosomal subunit protein uL29 (72 aa).

The protein belongs to the universal ribosomal protein uL29 family.

This Chlamydia felis (strain Fe/C-56) (Chlamydophila felis) protein is Large ribosomal subunit protein uL29.